The sequence spans 1194 residues: Multidrug efflux ATP-binding/permease protein Rv0194 (1194 aa).

A run of 6 helical transmembrane segments spans residues 20 to 40, 56 to 76, 130 to 150, 153 to 173, 258 to 278, and 279 to 299; these read LLLGFGAALAGTVIAVLVPLV, LAPWAVVLVAAAGATYLLMYV, LLFDVPNVLRHVLTLLLGVAV, WLSVPLALLAVLLVPVIGLIA, FALGGWMAAQGSITVGTFVAF, and WACLTLLARPACDLAGMLTIA. Positions 21-301 constitute an ABC transmembrane type-1 1 domain; the sequence is LLGFGAALAG…LAGMLTIAQQ (281 aa). The ABC transporter 1 domain occupies 334–568; sequence LEFQRVSFGY…CPRYRELLSP (235 aa). Residue 367–374 participates in ATP binding; it reads GAPGSGKS. Transmembrane regions (helical) follow at residues 628–648, 660–680, 743–763, 765–785, 847–867, and 878–898; these read ALSLLLVAVQTCAGLLPPLLI, VLSALWWAALAGTATVVIRWV, LVVAVISVVTLVGILVALLAI, ARLVLLIFTTMPVLALATWQF, LLALYYPFVALLCSLATTLVL, and VISVGALVTYLLYIELLYTPI. An ABC transmembrane type-1 2 domain is found at 628–910; the sequence is ALSLLLVAVQ…LAQMFDDYQR (283 aa). The ABC transporter 2 domain maps to 942–1177; it reads VVFDAVHYSY…GGHYSRLWAA (236 aa). ATP is bound at residue 976–983; it reads GSTGSGKS.

Belongs to the ABC transporter superfamily. Lipid exporter (TC 3.A.1.106) family.

Its subcellular location is the cell inner membrane. Efflux is inhibited by reserpine. Overexpression in M.smegmatis increases resistance to erythromycin, ampicillin, novobiocin and vancomycin. It also reduces accumulation of ethidium bromide in the cell. This chain is Multidrug efflux ATP-binding/permease protein Rv0194, found in Mycobacterium tuberculosis (strain ATCC 25618 / H37Rv).